The sequence spans 828 residues: Periplasmic nitrate reductase (828 aa).

A signal peptide (tat-type signal) is located at residues M1 to A31. Residues I39–D95 form the 4Fe-4S Mo/W bis-MGD-type domain. Positions 46, 49, 53, and 81 each coordinate [4Fe-4S] cluster. Residues K83, Q150, N175, C179, W212–M219, S243–H247, Q262–D264, M372, Q376, N482, S508–D509, K531, D558, and T718–T727 contribute to the Mo-bis(molybdopterin guanine dinucleotide) site. F794 contacts substrate. The Mo-bis(molybdopterin guanine dinucleotide) site is built by N802 and K819.

It belongs to the prokaryotic molybdopterin-containing oxidoreductase family. NasA/NapA/NarB subfamily. As to quaternary structure, component of the periplasmic nitrate reductase NapAB complex composed of NapA and NapB. Requires [4Fe-4S] cluster as cofactor. It depends on Mo-bis(molybdopterin guanine dinucleotide) as a cofactor. Predicted to be exported by the Tat system. The position of the signal peptide cleavage has not been experimentally proven.

The protein resides in the periplasm. The catalysed reaction is 2 Fe(II)-[cytochrome] + nitrate + 2 H(+) = 2 Fe(III)-[cytochrome] + nitrite + H2O. Catalytic subunit of the periplasmic nitrate reductase complex NapAB. Receives electrons from NapB and catalyzes the reduction of nitrate to nitrite. The sequence is that of Periplasmic nitrate reductase from Escherichia coli (strain K12 / MC4100 / BW2952).